The following is a 451-amino-acid chain: Trigger factor (451 aa).

The 86-residue stretch at Asp-165 to Leu-250 folds into the PPIase FKBP-type domain.

This sequence belongs to the FKBP-type PPIase family. Tig subfamily.

It is found in the cytoplasm. It catalyses the reaction [protein]-peptidylproline (omega=180) = [protein]-peptidylproline (omega=0). Functionally, involved in protein export. Acts as a chaperone by maintaining the newly synthesized protein in an open conformation. Functions as a peptidyl-prolyl cis-trans isomerase. The protein is Trigger factor (tig) of Helicobacter pylori (strain J99 / ATCC 700824) (Campylobacter pylori J99).